The chain runs to 543 residues: Glucose-6-phosphate isomerase (543 aa).

Catalysis depends on Glu353, which acts as the Proton donor. Residues His384 and Lys504 contribute to the active site.

The protein belongs to the GPI family.

The protein localises to the cytoplasm. It carries out the reaction alpha-D-glucose 6-phosphate = beta-D-fructose 6-phosphate. Its pathway is carbohydrate biosynthesis; gluconeogenesis. It functions in the pathway carbohydrate degradation; glycolysis; D-glyceraldehyde 3-phosphate and glycerone phosphate from D-glucose: step 2/4. Functionally, catalyzes the reversible isomerization of glucose-6-phosphate to fructose-6-phosphate. The chain is Glucose-6-phosphate isomerase from Roseiflexus sp. (strain RS-1).